The following is a 141-amino-acid chain: MRQRTIVCPLIQNEGHYLLCKMAADRGVFPGQWALSGGGVEPVERIEEALRREIREELGEKLILTHIAPWSFRDDTRVKTYPDGRQETIYMIYLIFDCVSANRDVTINEEFDDYAWVKAEDLKNYDLNAATRVTLSQKGLL.

Positions 1-141 constitute a Nudix hydrolase domain; the sequence is MRQRTIVCPL…RVTLSQKGLL (141 aa). The Nudix box signature appears at 38–59; sequence GGVEPVERIEEALRREIREELG.

It belongs to the Nudix hydrolase family. NudI subfamily. In terms of assembly, monomer. The cofactor is Mg(2+).

It carries out the reaction a ribonucleoside 5'-triphosphate + H2O = a ribonucleoside 5'-phosphate + diphosphate + H(+). The enzyme catalyses a 2'-deoxyribonucleoside 5'-triphosphate + H2O = a 2'-deoxyribonucleoside 5'-phosphate + diphosphate + H(+). The catalysed reaction is dUTP + H2O = dUMP + diphosphate + H(+). It catalyses the reaction dTTP + H2O = dTMP + diphosphate + H(+). It carries out the reaction dCTP + H2O = dCMP + diphosphate + H(+). Functionally, catalyzes the hydrolysis of nucleoside triphosphates, with a preference for pyrimidine deoxynucleoside triphosphates (dUTP, dTTP and dCTP). The chain is Nucleoside triphosphatase NudI from Klebsiella pneumoniae (strain 342).